Reading from the N-terminus, the 202-residue chain is Regulator of G-protein signaling 16 (202 aa).

S-palmitoyl cysteine attachment occurs at residues cysteine 2 and cysteine 12. The 117-residue stretch at 65 to 181 (SFDLLLSSKN…LKSPAYRDLA (117 aa)) folds into the RGS domain. The residue at position 168 (tyrosine 168) is a Phosphotyrosine; by EGFR. Tyrosine 177 carries the phosphotyrosine modification. The disordered stretch occupies residues 183 to 202 (QATAASASPSSSSPAEPLHT).

In terms of assembly, interacts with GNAI1 and GNAQ. Interacts with GNAI3, GNAI3 and GNAO1. Post-translationally, palmitoylated on Cys-2 and/or Cys-12. In terms of processing, phosphorylated. Phosphorylation at Tyr-168 by EGFR enhances GTPase accelerating (GAP) activity toward GNAI1.

It localises to the membrane. Functionally, regulates G protein-coupled receptor signaling cascades. Inhibits signal transduction by increasing the GTPase activity of G protein alpha subunits, thereby driving them into their inactive GDP-bound form. Plays an important role in the phototransduction cascade by regulating the lifetime and effective concentration of activated transducin alpha. May regulate extra and intracellular mitogenic signals. This chain is Regulator of G-protein signaling 16 (RGS16), found in Bos taurus (Bovine).